The primary structure comprises 158 residues: Transcription elongation factor GreB (158 aa).

The protein belongs to the GreA/GreB family. GreB subfamily.

Its function is as follows. Necessary for efficient RNA polymerase transcription elongation past template-encoded arresting sites. The arresting sites in DNA have the property of trapping a certain fraction of elongating RNA polymerases that pass through, resulting in locked ternary complexes. Cleavage of the nascent transcript by cleavage factors such as GreA or GreB allows the resumption of elongation from the new 3'terminus. GreB releases sequences of up to 9 nucleotides in length. In Escherichia coli O157:H7, this protein is Transcription elongation factor GreB.